The primary structure comprises 278 residues: 4-deoxy-L-threo-5-hexosulose-uronate ketol-isomerase (278 aa).

Zn(2+)-binding residues include His196, His198, Glu203, and His245.

Belongs to the KduI family. It depends on Zn(2+) as a cofactor.

It carries out the reaction 5-dehydro-4-deoxy-D-glucuronate = 3-deoxy-D-glycero-2,5-hexodiulosonate. It participates in glycan metabolism; pectin degradation; 2-dehydro-3-deoxy-D-gluconate from pectin: step 4/5. Its function is as follows. Catalyzes the isomerization of 5-dehydro-4-deoxy-D-glucuronate to 3-deoxy-D-glycero-2,5-hexodiulosonate. The polypeptide is 4-deoxy-L-threo-5-hexosulose-uronate ketol-isomerase (Shigella boydii serotype 4 (strain Sb227)).